A 277-amino-acid chain; its full sequence is Phosphonoacetaldehyde hydrolase-like protein (277 aa).

Belongs to the HAD-like hydrolase superfamily. PhnX family.

The polypeptide is Phosphonoacetaldehyde hydrolase-like protein (phnX2) (Syntrophobacter fumaroxidans (strain DSM 10017 / MPOB)).